The primary structure comprises 311 residues: MPASLAAVKRRIQSTKSTRQITSAMQMVSTAKLNQIQHHTKTYQVYAEKVQAILVSLVKSHSADSLKYEQDSSLGDLFSKRPVKKTGILIITSDRGLVGSYNSNVIKSTLDKMKEDGLNADNTVFLTVGRTGAEFFKKRGMNVAYEFTGVSDVPTYREVHDVVKQAIQLYQDQVYDRLYISYSHYVNRISSQDRTEQMLPISADGLRQTEQEIGNRTAGDGVPLPASEYEIEPSDGGMLDMLVPQYAESLIYGAILDAKTSEHASSANAMRSASDNADDIISTLQLQYNRARQAAITTEITEITGGMTAQE.

The protein belongs to the ATPase gamma chain family. In terms of assembly, F-type ATPases have 2 components, CF(1) - the catalytic core - and CF(0) - the membrane proton channel. CF(1) has five subunits: alpha(3), beta(3), gamma(1), delta(1), epsilon(1). CF(0) has three main subunits: a, b and c.

Its subcellular location is the cell membrane. Its function is as follows. Produces ATP from ADP in the presence of a proton gradient across the membrane. The gamma chain is believed to be important in regulating ATPase activity and the flow of protons through the CF(0) complex. The polypeptide is ATP synthase gamma chain (Limosilactobacillus fermentum (strain NBRC 3956 / LMG 18251) (Lactobacillus fermentum)).